The primary structure comprises 115 residues: Movement protein TGB2 (115 aa).

The Cytoplasmic portion of the chain corresponds to 1 to 13 (MSAQGHRLTAPVN). Residues 14 to 34 (SEKVYIVLGLSFALVSITFLL) traverse the membrane as a helical segment. The Lumenal segment spans residues 35 to 74 (SRNSLPHVGDNIHSLPHGGAYRDGTKAILYNSPNLGSRVS). Residues 75–95 (LHNGKNAAFAAVLLLTLLIYG) traverse the membrane as a helical segment. Topologically, residues 96–115 (SKYISQRNHTCACGNNHSSH) are cytoplasmic.

The protein belongs to the Tymovirales TGBp2 protein family.

The protein resides in the host endoplasmic reticulum membrane. In terms of biological role, plays a role in viral cell-to-cell propagation, by facilitating genome transport to neighboring plant cells through plasmosdesmata,. The protein is Movement protein TGB2 of Potato virus X (PVX).